Reading from the N-terminus, the 441-residue chain is Protein cortex (441 aa).

WD repeat units follow at residues 110–148 (SITS…VDQG), 149–187 (QTMF…QFVQ), 193–233 (IQIC…KSLV), 235–276 (IEGA…RFMK), 277–320 (TNEI…KLRQ), 345–379 (SLWS…ESHT), and 380–420 (GLNR…KILA). The D-box signature appears at 379 to 390 (TGLNRIRTMVFS).

This sequence belongs to the WD repeat CORT family.

The protein localises to the cytoplasm. Controls wing pigmentation patterning, possibly by regulating scale cell development. Probably acts as an activator of the anaphase promoting complex/cyclosome (APC/C) that promotes the ubiquitin ligase activity and substrate specificity of the APC/C. This Biston betularia (Pepper-and-salt geometer moth) protein is Protein cortex.